The sequence spans 191 residues: MVDMSKVKLRIENIVASVDLFAQLDLEKVLDLCPNSKYNPEEFPGIICHLDDPKVALLIFSSGKLVVTGAKSVQDIERAVAKLAQKLKSIGVKFKRAPQIDVQNMVFSGDIGREFNLDVVALTLPNCEYEPEQFPGVIYRVKEPKSVILLFSSGKIVCSGAKSEADAWEAVRKLLRELDKYGLLEEEEEEL.

Repeat copies occupy residues 11–87 and 102–178.

The protein belongs to the TBP family.

In terms of biological role, general factor that plays a role in the activation of archaeal genes transcribed by RNA polymerase. Binds specifically to the TATA box promoter element which lies close to the position of transcription initiation. This Pyrococcus furiosus (strain ATCC 43587 / DSM 3638 / JCM 8422 / Vc1) protein is TATA-box-binding protein (tbp).